We begin with the raw amino-acid sequence, 422 residues long: Adenylosuccinate synthetase (422 aa).

GTP is bound by residues 11–17 and 39–41; these read GDEGKGK and GHT. Asp-12 acts as the Proton acceptor in catalysis. Residues Asp-12 and Gly-39 each coordinate Mg(2+). Residues 12 to 15, 37 to 40, Thr-129, Arg-143, Asn-219, Thr-234, and Arg-298 each bind IMP; these read DEGK and NAGH. His-40 acts as the Proton donor in catalysis. 294–300 provides a ligand contact to substrate; the sequence is VTTGRRR. Residues Arg-300, 326-328, and 409-411 contribute to the GTP site; these read KLD and GTG.

This sequence belongs to the adenylosuccinate synthetase family. As to quaternary structure, homodimer. Mg(2+) is required as a cofactor.

It is found in the cytoplasm. The enzyme catalyses IMP + L-aspartate + GTP = N(6)-(1,2-dicarboxyethyl)-AMP + GDP + phosphate + 2 H(+). It participates in purine metabolism; AMP biosynthesis via de novo pathway; AMP from IMP: step 1/2. Plays an important role in the de novo pathway and in the salvage pathway of purine nucleotide biosynthesis. Catalyzes the first committed step in the biosynthesis of AMP from IMP. The polypeptide is Adenylosuccinate synthetase (Ajellomyces capsulatus (strain NAm1 / WU24) (Darling's disease fungus)).